A 124-amino-acid chain; its full sequence is Small ribosomal subunit protein uS12 (124 aa).

Residues 1–24 are disordered; sequence MTTINQLVRKPRQATTYKSASPAL. D89 bears the 3-methylthioaspartic acid mark.

Belongs to the universal ribosomal protein uS12 family. As to quaternary structure, part of the 30S ribosomal subunit. Contacts proteins S8 and S17. May interact with IF1 in the 30S initiation complex.

With S4 and S5 plays an important role in translational accuracy. Functionally, interacts with and stabilizes bases of the 16S rRNA that are involved in tRNA selection in the A site and with the mRNA backbone. Located at the interface of the 30S and 50S subunits, it traverses the body of the 30S subunit contacting proteins on the other side and probably holding the rRNA structure together. The combined cluster of proteins S8, S12 and S17 appears to hold together the shoulder and platform of the 30S subunit. In Xanthomonas axonopodis pv. citri (strain 306), this protein is Small ribosomal subunit protein uS12.